The primary structure comprises 248 residues: Small ribosomal subunit protein uS3 (248 aa).

The KH type-2 domain occupies 39-108; it reads IRKLVSQKLA…TVAVNVAEIP (70 aa). Residues 212 to 248 are disordered; sequence KTETLARPPRKSDERRREDGERPSRRRPTARRRPGGE. Over residues 221-234 the composition is skewed to basic and acidic residues; it reads RKSDERRREDGERP. The span at 235 to 248 shows a compositional bias: basic residues; it reads SRRRPTARRRPGGE.

This sequence belongs to the universal ribosomal protein uS3 family. Part of the 30S ribosomal subunit. Forms a tight complex with proteins S10 and S14.

Binds the lower part of the 30S subunit head. Binds mRNA in the 70S ribosome, positioning it for translation. This Deinococcus geothermalis (strain DSM 11300 / CIP 105573 / AG-3a) protein is Small ribosomal subunit protein uS3.